We begin with the raw amino-acid sequence, 200 residues long: Ribosomal RNA large subunit methyltransferase E (200 aa).

The S-adenosyl-L-methionine site is built by G49, W51, D69, D87, and D111. K151 acts as the Proton acceptor in catalysis.

Belongs to the class I-like SAM-binding methyltransferase superfamily. RNA methyltransferase RlmE family.

It is found in the cytoplasm. It carries out the reaction uridine(2552) in 23S rRNA + S-adenosyl-L-methionine = 2'-O-methyluridine(2552) in 23S rRNA + S-adenosyl-L-homocysteine + H(+). In terms of biological role, specifically methylates the uridine in position 2552 of 23S rRNA at the 2'-O position of the ribose in the fully assembled 50S ribosomal subunit. This chain is Ribosomal RNA large subunit methyltransferase E, found in Lawsonia intracellularis (strain PHE/MN1-00).